A 491-amino-acid polypeptide reads, in one-letter code: MQPAMMMFSSKYWARRGFSLDSAVPEEHQLLGNLTVNKSNSGKNDDKKGNKGSSRSETAPDSGKTAVVFSLRNEVGGLVKALKLFQEKHVNMVHIESRKSRRRSSEVEIFVDCECGKTEFNELIQLLKFQTTIVTLNPPENIWTEEEELEDVPWFPRKISELDKCSHRVLMYGSELDADHPGFKDNVYRQRRKYFVDVAMSYKYGQPIPRVEYTEEETKTWGVVFRELSRLYPTHACQEYLKNFPLLTKYCGYREDNVPQLEDVSMFLKERSGFAVRPVAGYLSPRDFLAGLAYRVFHCTQYVRHSSDPLYTPEPDTCHELLGHVPLLADPKFAQFSQEIGLASLGASDEDVQKLATCYFFTIEFGLCKQEGQLRAYGAGLLSSIGELKHALSDKACVKAFDPKTTCLQECLITTFQEAYFVSESFEEAKEKMREFAKSITRPFSVHFNPYTQSVEVLKDSRSIESVVQDLRSDLNTVCDALNKMNQYLGV.

Serine 19 bears the Phosphoserine mark. The disordered stretch occupies residues 33–63 (NLTVNKSNSGKNDDKKGNKGSSRSETAPDSG). One can recognise an ACT domain in the interval 66-141 (AVVFSLRNEV…TIVTLNPPEN (76 aa)). 3 residues coordinate Fe cation: histidine 319, histidine 324, and glutamate 364.

It belongs to the biopterin-dependent aromatic amino acid hydroxylase family. In terms of assembly, interacts with DNAJC12. It depends on Fe(2+) as a cofactor.

The enzyme catalyses (6R)-L-erythro-5,6,7,8-tetrahydrobiopterin + L-tryptophan + O2 = 5-hydroxy-L-tryptophan + (4aS,6R)-4a-hydroxy-L-erythro-5,6,7,8-tetrahydrobiopterin. It functions in the pathway aromatic compound metabolism; serotonin biosynthesis; serotonin from L-tryptophan: step 1/2. The protein is Tryptophan 5-hydroxylase 2 (TPH2) of Equus caballus (Horse).